A 199-amino-acid chain; its full sequence is Fe/S biogenesis protein NfuA (199 aa).

[4Fe-4S] cluster is bound by residues cysteine 151 and cysteine 154.

Belongs to the NfuA family. In terms of assembly, homodimer. [4Fe-4S] cluster is required as a cofactor.

In terms of biological role, involved in iron-sulfur cluster biogenesis. Binds a 4Fe-4S cluster, can transfer this cluster to apoproteins, and thereby intervenes in the maturation of Fe/S proteins. Could also act as a scaffold/chaperone for damaged Fe/S proteins. The sequence is that of Fe/S biogenesis protein NfuA from Xylella fastidiosa (strain M12).